The following is a 282-amino-acid chain: Elongation factor Ts (282 aa).

The segment at 80–83 is involved in Mg(2+) ion dislocation from EF-Tu; sequence TDFV.

This sequence belongs to the EF-Ts family.

The protein resides in the cytoplasm. Its function is as follows. Associates with the EF-Tu.GDP complex and induces the exchange of GDP to GTP. It remains bound to the aminoacyl-tRNA.EF-Tu.GTP complex up to the GTP hydrolysis stage on the ribosome. The polypeptide is Elongation factor Ts (Chlamydia felis (strain Fe/C-56) (Chlamydophila felis)).